The sequence spans 347 residues: EIKETFKYINTVVSCLVFVLGIIGNSTLLRIIYKNKCMRNGPNILIASLALGDLLHIIIDIPISVYKLLAEDWPFGVEMCKLVPFIQKASVGITVLSLCALSIDRYRAVASWSRIKGIGVPKWTAVEIVLIWVISVVLAVPEAIAFDMITMEYRGKDLRICLLHPTQKTSFMMFYKQAKDWWLFSFYFCLPLAITALFYTLMTCEMLRKKSGMQIALNDHLKQRREVAKTVFCLVLVFALCWLPLHLSRILKLTIYDQKDPNRCELLSFFLVMDYIGINMASLNSCINPIALYLVSKRFQNCFKSCLCCWCQSKDLLSLEERQSCLKFKANDHGYDNFRSSNKYSSS.

Topologically, residues 1-7 (EIKETFK) are extracellular. Residues 8–32 (YINTVVSCLVFVLGIIGNSTLLRII) form a helical membrane-spanning segment. Topologically, residues 33 to 43 (YKNKCMRNGPN) are cytoplasmic. The helical transmembrane segment at 44 to 69 (ILIASLALGDLLHIIIDIPISVYKLL) threads the bilayer. Residues 70-81 (AEDWPFGVEMCK) are Extracellular-facing. A disulfide bridge links Cys-80 with Cys-161. The helical transmembrane segment at 82–103 (LVPFIQKASVGITVLSLCALSI) threads the bilayer. Residues 104–124 (DRYRAVASWSRIKGIGVPKWT) lie on the Cytoplasmic side of the membrane. The chain crosses the membrane as a helical span at residues 125-149 (AVEIVLIWVISVVLAVPEAIAFDMI). Residues 150–177 (TMEYRGKDLRICLLHPTQKTSFMMFYKQ) are Extracellular-facing. A helical membrane pass occupies residues 178-202 (AKDWWLFSFYFCLPLAITALFYTLM). Topologically, residues 203-230 (TCEMLRKKSGMQIALNDHLKQRREVAKT) are cytoplasmic. A helical membrane pass occupies residues 231–256 (VFCLVLVFALCWLPLHLSRILKLTIY). The Extracellular portion of the chain corresponds to 257–268 (DQKDPNRCELLS). The chain crosses the membrane as a helical span at residues 269–295 (FFLVMDYIGINMASLNSCINPIALYLV). Over 296–347 (SKRFQNCFKSCLCCWCQSKDLLSLEERQSCLKFKANDHGYDNFRSSNKYSSS) the chain is Cytoplasmic. Residues Cys-309 and Cys-311 are each lipidated (S-palmitoyl cysteine).

Belongs to the G-protein coupled receptor 1 family. Endothelin receptor subfamily. EDNRB sub-subfamily.

It is found in the cell membrane. Its function is as follows. Non-specific receptor for endothelin 1, 2, and 3. Mediates its action by association with G proteins that activate a phosphatidylinositol-calcium second messenger system. In Coturnix japonica (Japanese quail), this protein is Endothelin receptor type B (EDNRB).